We begin with the raw amino-acid sequence, 305 residues long: Probable aspartoacylase (305 aa).

Zn(2+)-binding residues include histidine 13 and glutamate 16. Substrate is bound by residues arginine 55 and 62–63 (NR). Position 105 (histidine 105) interacts with Zn(2+). Positions 163 and 273 each coordinate substrate.

Belongs to the AspA/AstE family. Aspartoacylase subfamily. It depends on Zn(2+) as a cofactor.

The catalysed reaction is an N-acyl-L-aspartate + H2O = a carboxylate + L-aspartate. The sequence is that of Probable aspartoacylase from Prochlorococcus marinus (strain NATL1A).